The sequence spans 75 residues: Transcription attenuation protein MtrB (75 aa).

The protein belongs to the MtrB family. As to quaternary structure, oligomer of 11 identical subunits arranged in doughnut-like structure.

Functionally, required for transcription attenuation control in the Trp operon. This trans-acting factor seems to recognize a 10 bases nucleotide sequence in the Trp leader transcript causing transcription termination. Binds the leader RNA only in presence of L-tryptophan. The protein is Transcription attenuation protein MtrB of Bacillus velezensis (strain DSM 23117 / BGSC 10A6 / LMG 26770 / FZB42) (Bacillus amyloliquefaciens subsp. plantarum).